The following is a 103-amino-acid chain: NADH-quinone oxidoreductase subunit K (103 aa).

The next 3 membrane-spanning stretches (helical) occupy residues 1–21, 29–49, and 62–82; these read MIVP…VGGV, ILLI…AFAG, and AVII…ALLV. The disordered stretch occupies residues 84 to 103; it reads GRRGGGTDRADSYDRLGEES. The segment covering 88–103 has biased composition (basic and acidic residues); that stretch reads GGTDRADSYDRLGEES.

The protein belongs to the complex I subunit 4L family. In terms of assembly, NDH-1 is composed of 14 different subunits. Subunits NuoA, H, J, K, L, M, N constitute the membrane sector of the complex.

The protein localises to the cell inner membrane. It catalyses the reaction a quinone + NADH + 5 H(+)(in) = a quinol + NAD(+) + 4 H(+)(out). NDH-1 shuttles electrons from NADH, via FMN and iron-sulfur (Fe-S) centers, to quinones in the respiratory chain. The immediate electron acceptor for the enzyme in this species is believed to be ubiquinone. Couples the redox reaction to proton translocation (for every two electrons transferred, four hydrogen ions are translocated across the cytoplasmic membrane), and thus conserves the redox energy in a proton gradient. The chain is NADH-quinone oxidoreductase subunit K from Solidesulfovibrio magneticus (strain ATCC 700980 / DSM 13731 / RS-1) (Desulfovibrio magneticus).